We begin with the raw amino-acid sequence, 411 residues long: Flagellum-associated coiled-coil domain-containing protein 1 (411 aa).

Residues serine 52–proline 77 form a disordered region. Residues proline 61–asparagine 74 show a composition bias toward basic and acidic residues. 2 coiled-coil regions span residues serine 124–methionine 220 and asparagine 278–glutamate 328. Lysine 353 is modified (N6-acetyllysine). Positions phenylalanine 355–leucine 385 form a coiled coil.

The protein localises to the cytoplasm. It is found in the cytoplasmic granule. The protein resides in the cell projection. Its subcellular location is the cilium. It localises to the flagellum. This Rattus norvegicus (Rat) protein is Flagellum-associated coiled-coil domain-containing protein 1.